Consider the following 1551-residue polypeptide: Serine/threonine-protein kinase MRCK gamma (1551 aa).

In terms of domain architecture, Protein kinase spans 71–337; the sequence is FEILKVIGRG…LDDFRKHPFF (267 aa). Residues 77–85 and Lys-100 contribute to the ATP site; that span reads IGRGAFGEV. Asp-195 serves as the catalytic Proton acceptor. 2 positions are modified to phosphoserine; by autocatalysis: Ser-216 and Ser-228. Thr-234 is modified (phosphothreonine; by autocatalysis). The region spanning 338 to 408 is the AGC-kinase C-terminal domain; sequence EGVDWERLAT…TSGSPFDVQS (71 aa). 2 coiled-coil regions span residues 442-675 and 729-801; these read QPQE…TESN and KARR…QARG. Residues 578 to 605 are disordered; it reads QESSQAKTVHAAPETNGIGSPEGQSQEA. The interval 820-886 is disordered; the sequence is TEKDSAKDPG…SHTLRPRSFP (67 aa). Residues 839–849 show a composition bias toward basic and acidic residues; it reads AEAELRPEGRR. A Phorbol-ester/DAG-type zinc finger spans residues 877-926; sequence SHTLRPRSFPSPTKCLRCTSLMLGLGRQGLGCDTCGYFCHSACASQAPPC. Residues 946–1065 enclose the PH domain; that stretch reads GTAYEGFLSV…WLQVLGELQR (120 aa). The region spanning 1091–1365 is the CNH domain; sequence LPHALCAAVI…RPLNPEGSLF (275 aa). The CRIB domain occupies 1436–1449; the sequence is ISPPTNFNHLVHVG. A disordered region spans residues 1441 to 1551; the sequence is NFNHLVHVGP…PPDPESESSP (111 aa). Over residues 1455–1468 the composition is skewed to basic and acidic residues; sequence PNTRDGTRAQEQKS. Ser-1481 carries the phosphoserine modification. The segment covering 1511–1527 has biased composition (polar residues); the sequence is TSLSSESVSCPQGSLSP.

Belongs to the protein kinase superfamily. AGC Ser/Thr protein kinase family. DMPK subfamily. Homodimer and homotetramer via the coiled coil regions. Interacts tightly with GTP-bound but not GDP-bound CDC42. The cofactor is Mg(2+).

Its subcellular location is the cytoplasm. The catalysed reaction is L-seryl-[protein] + ATP = O-phospho-L-seryl-[protein] + ADP + H(+). The enzyme catalyses L-threonyl-[protein] + ATP = O-phospho-L-threonyl-[protein] + ADP + H(+). Maintained in an inactive, closed conformation by an interaction between the kinase domain and the negative autoregulatory C-terminal coiled-coil region. Agonist binding to the phorbol ester binding site disrupts this, releasing the kinase domain to allow N-terminus-mediated dimerization and kinase activation by transautophosphorylation. Functionally, may act as a downstream effector of CDC42 in cytoskeletal reorganization. Contributes to the actomyosin contractility required for cell invasion, through the regulation of MYPT1 and thus MLC2 phosphorylation. This chain is Serine/threonine-protein kinase MRCK gamma, found in Mus musculus (Mouse).